Reading from the N-terminus, the 1337-residue chain is uncharacterized protein (1337 aa).

Disordered stretches follow at residues methionine 1–alanine 94 and alanine 119–phenylalanine 174. Composition is skewed to low complexity over residues serine 18 to serine 37 and serine 68 to serine 79. Positions asparagine 80–alanine 94 are enriched in polar residues. Low complexity predominate over residues proline 123 to serine 147. A compositionally biased stretch (basic and acidic residues) spans asparagine 157 to proline 167. Helical transmembrane passes span glycine 209 to alanine 229, phenylalanine 241 to tryptophan 261, phenylalanine 267 to alanine 287, valine 328 to isoleucine 348, cysteine 361 to phenylalanine 381, and leucine 387 to isoleucine 407. 2 disordered regions span residues serine 623–serine 662 and tyrosine 868–histidine 894. Residues arginine 626 to lysine 644 show a composition bias toward polar residues. The segment covering tyrosine 868–methionine 880 has biased composition (basic and acidic residues). A run of 6 helical transmembrane segments spans residues methionine 917–cysteine 937, isoleucine 975–histidine 995, leucine 997–isoleucine 1017, phenylalanine 1021–threonine 1041, phenylalanine 1066–arginine 1086, and phenylalanine 1275–isoleucine 1295.

Its subcellular location is the membrane. This is an uncharacterized protein from Schizosaccharomyces pombe (strain 972 / ATCC 24843) (Fission yeast).